Consider the following 78-residue polypeptide: UPF0270 protein YPTB3725 (78 aa).

Belongs to the UPF0270 family.

The polypeptide is UPF0270 protein YPTB3725 (Yersinia pseudotuberculosis serotype I (strain IP32953)).